The chain runs to 299 residues: Phosphoribosylaminoimidazole-succinocarboxamide synthase (299 aa).

This sequence belongs to the SAICAR synthetase family.

The enzyme catalyses 5-amino-1-(5-phospho-D-ribosyl)imidazole-4-carboxylate + L-aspartate + ATP = (2S)-2-[5-amino-1-(5-phospho-beta-D-ribosyl)imidazole-4-carboxamido]succinate + ADP + phosphate + 2 H(+). Its pathway is purine metabolism; IMP biosynthesis via de novo pathway; 5-amino-1-(5-phospho-D-ribosyl)imidazole-4-carboxamide from 5-amino-1-(5-phospho-D-ribosyl)imidazole-4-carboxylate: step 1/2. This chain is Phosphoribosylaminoimidazole-succinocarboxamide synthase, found in Desulfatibacillum aliphaticivorans.